The chain runs to 441 residues: Nuclear distribution protein nudF (441 aa).

A LisH domain is found at 9-41 (QAEELHKSIIAYLASVNLTESSAALRAELGDSV). WD repeat units follow at residues 87 to 128 (GHRE…RTVK), 130 to 170 (HTKA…KNIR), 174 to 221 (GHDH…CVKT), 224 to 263 (GHVDWVRAVAPSLDGRFLFAAGDDRIPRLWDLSSAETKST), 266 to 326 (GHEH…IKTL), 328 to 367 (GHDNWVRALAFHPGGKHLLSVADDKTIRCWDLTQECKCVR), 372 to 402 (AHGHFVTCLRWAPPLIKDGGANGESETNGAP), and 403 to 440 (AATATTNGVRPDPNAANKISIRCVIATGSVDRKVRIFA). Residues 390 to 415 (GGANGESETNGAPAATATTNGVRPDP) form a disordered region. A compositionally biased stretch (low complexity) spans 398 to 410 (TNGAPAATATTNG).

It belongs to the WD repeat LIS1/nudF family. As to quaternary structure, self-associates. Interacts with nudE and dynein.

It is found in the cytoplasm. It localises to the cytoskeleton. The protein resides in the spindle pole. Its function is as follows. Positively regulates the activity of the minus-end directed microtubule motor protein dynein. May enhance dynein-mediated microtubule sliding by targeting dynein to the microtubule plus end. Required for nuclear migration during vegetative growth as well as development. Required for retrograde early endosome (EE) transport from the hyphal tip. Required for localization of dynein to the mitotic spindle poles. Recruits additional proteins to the dynein complex at SPBs. The polypeptide is Nuclear distribution protein nudF (Neosartorya fischeri (strain ATCC 1020 / DSM 3700 / CBS 544.65 / FGSC A1164 / JCM 1740 / NRRL 181 / WB 181) (Aspergillus fischerianus)).